A 267-amino-acid chain; its full sequence is tRNA pseudouridine synthase A (267 aa).

The active-site Nucleophile is the Asp55. Tyr109 is a binding site for substrate.

This sequence belongs to the tRNA pseudouridine synthase TruA family.

It carries out the reaction uridine(38/39/40) in tRNA = pseudouridine(38/39/40) in tRNA. In terms of biological role, formation of pseudouridine at positions 38, 39 and 40 in the anticodon stem and loop of transfer RNAs. This Natronomonas pharaonis (strain ATCC 35678 / DSM 2160 / CIP 103997 / JCM 8858 / NBRC 14720 / NCIMB 2260 / Gabara) (Halobacterium pharaonis) protein is tRNA pseudouridine synthase A.